A 290-amino-acid chain; its full sequence is Transposon Ty3-I Gag polyprotein (290 aa).

S2 carries the N-acetylserine modification. The CCHC-type zinc-finger motif lies at 265-282 (RLCFYCKKEGHRLNECRA).

The protein localises to the cytoplasm. Its function is as follows. Capsid protein (CA) is the structural component of the virus-like particle (VLP), forming the shell that encapsulates the retrotransposons dimeric RNA genome. Functionally, nucleocapsid protein p9 (NC) forms the nucleocore that coats the retro-elements dimeric RNA. Binds these RNAs through its zinc fingers. Promotes primer tRNA(i)-Met annealing to the multipartite primer-binding site (PBS), dimerization of Ty3 RNA and initiation of reverse transcription. In Saccharomyces cerevisiae (strain ATCC 204508 / S288c) (Baker's yeast), this protein is Transposon Ty3-I Gag polyprotein (TY3A-I).